A 221-amino-acid polypeptide reads, in one-letter code: Large ribosomal subunit protein uL16A (221 aa).

This sequence belongs to the universal ribosomal protein uL16 family. In terms of assembly, component of the large ribosomal subunit (LSU). Mature yeast ribosomes consist of a small (40S) and a large (60S) subunit. The 40S small subunit contains 1 molecule of ribosomal RNA (18S rRNA) and at least 33 different proteins. The large 60S subunit contains 3 rRNA molecules (25S, 5.8S and 5S rRNA) and at least 46 different proteins.

Its subcellular location is the cytoplasm. In terms of biological role, component of the ribosome, a large ribonucleoprotein complex responsible for the synthesis of proteins in the cell. The small ribosomal subunit (SSU) binds messenger RNAs (mRNAs) and translates the encoded message by selecting cognate aminoacyl-transfer RNA (tRNA) molecules. The large subunit (LSU) contains the ribosomal catalytic site termed the peptidyl transferase center (PTC), which catalyzes the formation of peptide bonds, thereby polymerizing the amino acids delivered by tRNAs into a polypeptide chain. The nascent polypeptides leave the ribosome through a tunnel in the LSU and interact with protein factors that function in enzymatic processing, targeting, and the membrane insertion of nascent chains at the exit of the ribosomal tunnel. The chain is Large ribosomal subunit protein uL16A (rpl1001) from Schizosaccharomyces pombe (strain 972 / ATCC 24843) (Fission yeast).